We begin with the raw amino-acid sequence, 202 residues long: Orotate phosphoribosyltransferase (202 aa).

5-phospho-alpha-D-ribose 1-diphosphate is bound by residues lysine 93 and 113–121; that span reads EDIITTGGS. 2 residues coordinate orotate: threonine 117 and arginine 145.

It belongs to the purine/pyrimidine phosphoribosyltransferase family. PyrE subfamily. As to quaternary structure, homodimer. Mg(2+) serves as cofactor.

The catalysed reaction is orotidine 5'-phosphate + diphosphate = orotate + 5-phospho-alpha-D-ribose 1-diphosphate. Its pathway is pyrimidine metabolism; UMP biosynthesis via de novo pathway; UMP from orotate: step 1/2. Catalyzes the transfer of a ribosyl phosphate group from 5-phosphoribose 1-diphosphate to orotate, leading to the formation of orotidine monophosphate (OMP). The sequence is that of Orotate phosphoribosyltransferase from Campylobacter fetus subsp. fetus (strain 82-40).